Reading from the N-terminus, the 606-residue chain is Aspartate--tRNA(Asp/Asn) ligase (606 aa).

Glu187 provides a ligand contact to L-aspartate. Residues 211-214 are aspartate; it reads QQFK. The L-aspartate site is built by Arg233 and His461. 233 to 235 contributes to the ATP binding site; sequence RDE. Glu495 is an ATP binding site. L-aspartate is bound at residue Arg502. Residue 547–550 coordinates ATP; it reads GLDR.

The protein belongs to the class-II aminoacyl-tRNA synthetase family. Type 1 subfamily. Homodimer.

The protein resides in the cytoplasm. The catalysed reaction is tRNA(Asx) + L-aspartate + ATP = L-aspartyl-tRNA(Asx) + AMP + diphosphate. Functionally, aspartyl-tRNA synthetase with relaxed tRNA specificity since it is able to aspartylate not only its cognate tRNA(Asp) but also tRNA(Asn). Reaction proceeds in two steps: L-aspartate is first activated by ATP to form Asp-AMP and then transferred to the acceptor end of tRNA(Asp/Asn). This Chlorobium phaeobacteroides (strain DSM 266 / SMG 266 / 2430) protein is Aspartate--tRNA(Asp/Asn) ligase.